A 236-amino-acid polypeptide reads, in one-letter code: Rho-related GTP-binding protein RhoV (236 aa).

The interval 1–28 is disordered; the sequence is MPPRELSEAEPPPLPASTPPPRRRSAPP. Positions 10–20 are enriched in pro residues; that stretch reads EPPPLPASTPP. S25 carries the phosphoserine modification. Residues 38–45, 85–89, and 143–146 contribute to the GTP site; these read GDGAVGKS, DTAGQ, and TQAD. The S-palmitoyl cysteine moiety is linked to residue C234.

The protein belongs to the small GTPase superfamily. Rho family. Interacts with PAK2. It depends on Mg(2+) as a cofactor. As to expression, highly expressed in brain and testis and at lower levels in spleen and lung.

The protein localises to the cell membrane. Its subcellular location is the endosome membrane. Its function is as follows. Plays a role in the control of the actin cytoskeleton via activation of the JNK pathway. The chain is Rho-related GTP-binding protein RhoV from Rattus norvegicus (Rat).